A 563-amino-acid polypeptide reads, in one-letter code: Rhotekin (563 aa).

An Omega-N-methylarginine modification is found at Arg-14. The region spanning 17–98 is the REM-1 domain; sequence ALEMEFKRGR…LQRRKEAQVL (82 aa). Residues Ser-30 and Ser-106 each carry the phosphoserine modification. A disordered region spans residues 96–116; sequence QVLGKTSRRPSDSGPPAERSP. Arg-230 is modified (asymmetric dimethylarginine). Ser-232 carries the phosphoserine modification. The 108-residue stretch at 309 to 416 folds into the PH domain; that stretch reads QPTASGTLRV…WMEALWQLFF (108 aa). A disordered region spans residues 518–563; the sequence is TFSLDAVPPDHSPRARSVAPLPPQRSPRTRGLCSKGQPRTWLQSPV. Ser-520, Ser-529, and Ser-543 each carry phosphoserine.

In terms of assembly, interacts via its C-terminal region with the TAX1BP3 PDZ domain. This interaction facilitates Rho-mediated activation of the c-Fos serum response element (SRE). Interacts with SEPT9. Specifically binds to GTP-bound RHOA, RHOB and RHOC and inhibits their GTPase activity. As to expression, highly expressed in prostate, moderately in kidney, heart, brain, spleen, testis, placenta, small intestine, pancreas, skeletal muscle and peripheral blood leukocytes, and weakly in ovary, colon and thymus. Weakly expressed in all normal cell lines tested. Overexpressed in various cancer cell lines.

Functionally, mediates Rho signaling to activate NF-kappa-B and may confer increased resistance to apoptosis to cells in gastric tumorigenesis. May play a novel role in the organization of septin structures. The protein is Rhotekin of Homo sapiens (Human).